The following is a 276-amino-acid chain: Ribonuclease 3 (276 aa).

Positions 30 to 161 (LTAFIRSLFK…LTGAIYLDRG (132 aa)) constitute an RNase III domain. E74 contributes to the Mg(2+) binding site. The active site involves D78. Mg(2+)-binding residues include D147 and E150. E150 is a catalytic residue. A DRBM domain is found at 188 to 257 (NHKSRLIEHT…AEEAMGALER (70 aa)).

Belongs to the ribonuclease III family. In terms of assembly, homodimer. Mg(2+) serves as cofactor.

It localises to the cytoplasm. It carries out the reaction Endonucleolytic cleavage to 5'-phosphomonoester.. In terms of biological role, digests double-stranded RNA. Involved in the processing of primary rRNA transcript to yield the immediate precursors to the large and small rRNAs (23S and 16S). Processes some mRNAs, and tRNAs when they are encoded in the rRNA operon. Processes pre-crRNA and tracrRNA of type II CRISPR loci if present in the organism. The protein is Ribonuclease 3 of Chlorobium luteolum (strain DSM 273 / BCRC 81028 / 2530) (Pelodictyon luteolum).